The following is a 186-amino-acid chain: Ribosome-recycling factor (186 aa).

The protein belongs to the RRF family.

The protein resides in the cytoplasm. Responsible for the release of ribosomes from messenger RNA at the termination of protein biosynthesis. May increase the efficiency of translation by recycling ribosomes from one round of translation to another. This Polaromonas naphthalenivorans (strain CJ2) protein is Ribosome-recycling factor.